The primary structure comprises 200 residues: THO complex subunit tho5 (200 aa).

It belongs to the THOC5 family. In terms of assembly, component of the THO and TREX complexes.

The protein localises to the cytoplasm. It localises to the nucleus. Its function is as follows. Component the THO subcomplex of the TREX complex, which operates in coupling transcription elongation to mRNA export. The THO complex is recruited to transcribed genes and moves along the gene with the elongating polymerase during transcription. THO is important for stabilizing nascent RNA in the RNA polymerase II elongation complex by preventing formation of DNA:RNA hybrids behind the elongating polymerase. The THO complex is also required to maintain TRAMP complex occupancy at sites of snoRNA transcription thus promoting exosome-mediated degradation of snoRNA precursors. The sequence is that of THO complex subunit tho5 from Schizosaccharomyces pombe (strain 972 / ATCC 24843) (Fission yeast).